A 358-amino-acid chain; its full sequence is Phosphoserine aminotransferase (358 aa).

Arginine 41 lines the L-glutamate pocket. Pyridoxal 5'-phosphate-binding positions include 75–76 (AS), tryptophan 100, threonine 148, aspartate 167, and glutamine 190. Lysine 191 carries the post-translational modification N6-(pyridoxal phosphate)lysine. 233–234 (NT) is a binding site for pyridoxal 5'-phosphate.

Belongs to the class-V pyridoxal-phosphate-dependent aminotransferase family. SerC subfamily. As to quaternary structure, homodimer. The cofactor is pyridoxal 5'-phosphate.

The protein localises to the cytoplasm. It carries out the reaction O-phospho-L-serine + 2-oxoglutarate = 3-phosphooxypyruvate + L-glutamate. It catalyses the reaction 4-(phosphooxy)-L-threonine + 2-oxoglutarate = (R)-3-hydroxy-2-oxo-4-phosphooxybutanoate + L-glutamate. Its pathway is amino-acid biosynthesis; L-serine biosynthesis; L-serine from 3-phospho-D-glycerate: step 2/3. The protein operates within cofactor biosynthesis; pyridoxine 5'-phosphate biosynthesis; pyridoxine 5'-phosphate from D-erythrose 4-phosphate: step 3/5. Functionally, catalyzes the reversible conversion of 3-phosphohydroxypyruvate to phosphoserine and of 3-hydroxy-2-oxo-4-phosphonooxybutanoate to phosphohydroxythreonine. The chain is Phosphoserine aminotransferase from Campylobacter jejuni (strain RM1221).